The following is a 271-amino-acid chain: Co-chaperone protein DjlA (271 aa).

The Periplasmic segment spans residues 1-6 (MQYWGK). A helical transmembrane segment spans residues 7–31 (IIGVAVALLMGGGFWGVVLGLLIGH). At 32–271 (MFDKARSRKM…ELIKQQKGFK (240 aa)) the chain is on the cytoplasmic side. A J domain is found at 205-271 (DACNVLGVKP…ELIKQQKGFK (67 aa)).

As to quaternary structure, homodimer.

It localises to the cell inner membrane. Regulatory DnaK co-chaperone. Direct interaction between DnaK and DjlA is needed for the induction of the wcaABCDE operon, involved in the synthesis of a colanic acid polysaccharide capsule, possibly through activation of the RcsB/RcsC phosphotransfer signaling pathway. The colanic acid capsule may help the bacterium survive conditions outside the host. This is Co-chaperone protein DjlA from Escherichia coli O157:H7.